Consider the following 157-residue polypeptide: Ribosome maturation factor RimP (157 aa).

The protein belongs to the RimP family.

The protein localises to the cytoplasm. Its function is as follows. Required for maturation of 30S ribosomal subunits. In Thermus thermophilus (strain ATCC BAA-163 / DSM 7039 / HB27), this protein is Ribosome maturation factor RimP.